We begin with the raw amino-acid sequence, 434 residues long: Putative ankyrin repeat protein FPV219 (434 aa).

ANK repeat units follow at residues 33–62, 66–95, 101–131, 132–161, 165–195, 196–225, and 229–258; these read DDLSPLHHAVSRGYKEIVISMLEHGADVNL, EVCSPLHIAIKNDNVEMVQLLIDNGADTDC, HGTPLQCAILNENYRITDALLESGADTHEIY, TKNHPIIEAIKLDNLPLVRLLLRHGADVNT, LYGYPIHLAIRYGNIDIIKELLYHGVIESYS, LYPSLLHQSIMCNNKEVVLLLISMGFDVNA, and EGNTPMHLAVQKNLVGIVKILLDKGADTSI.

The polypeptide is Putative ankyrin repeat protein FPV219 (Fowlpox virus (strain NVSL) (FPV)).